A 626-amino-acid polypeptide reads, in one-letter code: Procollagen galactosyltransferase 2 (626 aa).

The first 27 residues, 1 to 27, serve as a signal peptide directing secretion; that stretch reads MAARPAATLAWSLLLLSSALLREGCRA. N-linked (GlcNAc...) asparagine glycans are attached at residues N97, N185, N382, and N580. Residues 604–626 are disordered; that stretch reads NAKNTEALPPPTSLDTVPSRDEL. A Prevents secretion from ER motif is present at residues 623–626; that stretch reads RDEL.

Belongs to the glycosyltransferase 25 family. In terms of tissue distribution, expressed in brain and skeletal muscle.

The protein resides in the endoplasmic reticulum lumen. The catalysed reaction is (5R)-5-hydroxy-L-lysyl-[collagen] + UDP-alpha-D-galactose = (5R)-5-O-(beta-D-galactosyl)-5-hydroxy-L-lysyl-[collagen] + UDP + H(+). In terms of biological role, beta-galactosyltransferase that transfers beta-galactose to hydroxylysine residues of collagen. This Homo sapiens (Human) protein is Procollagen galactosyltransferase 2 (COLGALT2).